A 627-amino-acid chain; its full sequence is MEGLAGYVYKAASEGRVLTLAALLLNRSESDIKYLLGYVSQHGGQRSTPLIIAARNGHTKVVRLLLEHYRVQTQQTGTVRFDGFVIDGATALWCAAGAGHFEVVKLLVSHGANVNHTTVTNSTPLRAACFDGRLDIVKYLVENNANISIANKYDNTCLMIAAYKGHTDVVRYLLEQHADPNAKAHCGATALHFAAEAGHLEIVRELVKWKAAMMVNGHGMTPLKVAAESCKADVVELLLAHAGCNRRSRIEALELLGASFANDRENYDIMKTYHYLYLAMLERYRDSENIIEKEVLPPIEAYGNRTECRTPQELESIRQDRDALHMEGLIVRERILGSDNIDVSHPIIYRGAVYADNMEFEQCIKLWLHALHLRQKGNRNTHKDLLRFAQVFSQMIHLNEPVKAKDIESVLRCSVLEIEQGMSRIKATQDDDIHTAVDNYECNIFTFLYLVCISTKTQCSEEDQSRINKQIYNLIHLDPRTRDGSTLLHHAVNSSTPVDDFHTNDVCSFPNALVTKLLLDCGADVNAVDNEGNSPLHLIVQYHRPISDFLTLHSIIISLVEAGAHTDMTNKQKKTPLDKSTTGVSEILLKTQMKLSLKCLAARAVRIYNISYQNQIPRTLEEFVKFH.

6 ANK repeats span residues 45 to 74 (QRST…VQTQ), 87 to 116 (DGAT…NVNH), 120 to 149 (TNST…NISI), 153 to 182 (YDNT…DPNA), 186 to 215 (CGAT…AMMV), and 218 to 248 (HGMT…NRRS). The TPR repeat unit spans residues 344-377 (SHPIIYRGAVYADNMEFEQCIKLWLHALHLRQKG). ANK repeat units lie at residues 483-527 (DGST…DVNA) and 531-568 (EGNS…HTDM).

This sequence belongs to the fem-1 family. Component of a CRL2 E3 ubiquitin-protein ligase complex, also named ECS (Elongin BC-CUL2/5-SOCS-box protein) complex.

It is found in the cytoplasm. The protein localises to the nucleus. The protein operates within protein modification; protein ubiquitination. Substrate-recognition component of a Cul2-RING (CRL2) E3 ubiquitin-protein ligase complex of the DesCEND (destruction via C-end degrons) pathway, which recognizes a C-degron located at the extreme C terminus of target proteins, leading to their ubiquitination and degradation. The C-degron recognized by the DesCEND pathway is usually a motif of less than ten residues and can be present in full-length proteins, truncated proteins or proteolytically cleaved forms. The CRL2(FEM1B) complex specifically recognizes proteins ending with -Gly-Leu-Asp-Arg, leading to their ubiquitination and degradation. This is Protein fem-1 homolog B from Gallus gallus (Chicken).